Reading from the N-terminus, the 269-residue chain is Monofunctional glycosyltransferase (269 aa).

A helical transmembrane segment spans residues 46 to 66; sequence ILLTILIIIALFIGIMYFLST.

This sequence belongs to the glycosyltransferase 51 family.

The protein localises to the cell membrane. The enzyme catalyses [GlcNAc-(1-&gt;4)-Mur2Ac(oyl-L-Ala-gamma-D-Glu-L-Lys-D-Ala-D-Ala)](n)-di-trans,octa-cis-undecaprenyl diphosphate + beta-D-GlcNAc-(1-&gt;4)-Mur2Ac(oyl-L-Ala-gamma-D-Glu-L-Lys-D-Ala-D-Ala)-di-trans,octa-cis-undecaprenyl diphosphate = [GlcNAc-(1-&gt;4)-Mur2Ac(oyl-L-Ala-gamma-D-Glu-L-Lys-D-Ala-D-Ala)](n+1)-di-trans,octa-cis-undecaprenyl diphosphate + di-trans,octa-cis-undecaprenyl diphosphate + H(+). It functions in the pathway cell wall biogenesis; peptidoglycan biosynthesis. Peptidoglycan polymerase that catalyzes glycan chain elongation using lipid-linked disaccharide-pentapeptide as the substrate. The polypeptide is Monofunctional glycosyltransferase (Staphylococcus aureus (strain JH1)).